The chain runs to 205 residues: Adenylyl-sulfate kinase (205 aa).

31-38 (GLSGAGKS) provides a ligand contact to ATP. Ser-105 serves as the catalytic Phosphoserine intermediate.

This sequence belongs to the APS kinase family.

It carries out the reaction adenosine 5'-phosphosulfate + ATP = 3'-phosphoadenylyl sulfate + ADP + H(+). Its pathway is sulfur metabolism; hydrogen sulfide biosynthesis; sulfite from sulfate: step 2/3. Functionally, catalyzes the synthesis of activated sulfate. This is Adenylyl-sulfate kinase from Shewanella sp. (strain ANA-3).